Reading from the N-terminus, the 432-residue chain is Cytoplasmic 60S subunit biogenesis factor REH1 (432 aa).

The C2H2-type 1 zinc-finger motif lies at 6 to 30 (FTCNCCVIQFKTSDLQRYHMKTEWH). The tract at residues 79 to 150 (QSNALPQKQK…NTDYGEDTVS (72 aa)) is disordered. Over residues 86–98 (KQKKPIKSKRGRK) the composition is skewed to basic residues. Residues 105-117 (KRKDRDIAKEKQN) show a composition bias toward basic and acidic residues. Positions 118 to 143 (RSVSPSGSISSQLSNLTVGTENTNTD) are enriched in polar residues. 2 C2H2-type zinc fingers span residues 186–209 (TECIYCGKDNKEVERNVKHMFSEH) and 237–261 (HNCLCCNFHGSGLESIRAHMASKRH).

The protein belongs to the REI1 family. In terms of assembly, associates with nascent pre-60S particles that have not yet entered the translating pool, and is released from mature 60S subunits. Interacts with pre-60S factors NMD3, LSG1, and TIF6.

It localises to the cytoplasm. Functionally, pre-60S-associated cytoplasmic factor involved in the cytoplasmic maturation of the 60S subunit. May act redundantly with REI1 to directly promote a stabilizing structural rearrangement in cytoplasmic 60S subunit maturation independent on the REI1-specific ARX1 recycling. The polypeptide is Cytoplasmic 60S subunit biogenesis factor REH1 (REH1) (Saccharomyces cerevisiae (strain ATCC 204508 / S288c) (Baker's yeast)).